The chain runs to 331 residues: Cytosolic 5'-nucleotidase 3A (331 aa).

Aspartate 83 acts as the Nucleophile in catalysis. Positions 83 and 85 each coordinate Mg(2+). Catalysis depends on aspartate 85, which acts as the Proton donor. Glutamate 130 provides a ligand contact to CMP. Positions 130 and 151 each coordinate N(7)-methyl-GMP. Substrate contacts are provided by residues 198-199 and lysine 247; that span reads SA. Aspartate 272 lines the Mg(2+) pocket.

The protein belongs to the pyrimidine 5'-nucleotidase family.

The protein resides in the cytoplasm. It carries out the reaction N(7)-methyl-GMP + H2O = N(7)-methylguanosine + phosphate. The catalysed reaction is a ribonucleoside 5'-phosphate + H2O = a ribonucleoside + phosphate. Functionally, nucleotidase which shows specific activity towards cytidine monophosphate (CMP) and 7-methylguanosine monophosphate (m(7)GMP). CMP seems to be the preferred substrate. The protein is Cytosolic 5'-nucleotidase 3A (NT5C3A) of Gallus gallus (Chicken).